We begin with the raw amino-acid sequence, 437 residues long: GTPase Der (437 aa).

EngA-type G domains follow at residues 4–168 and 178–353; these read NIVA…PEKP and PRFA…ENRK. GTP contacts are provided by residues 10-17, 57-61, 120-123, 184-191, 231-235, and 296-299; these read GRPNVGKS, DTGGY, NKVD, GRPNAGKS, DTAGI, and NKWD. The KH-like domain occupies 354-437; it reads QRISTSKFNE…VPIDIYIREK (84 aa).

The protein belongs to the TRAFAC class TrmE-Era-EngA-EngB-Septin-like GTPase superfamily. EngA (Der) GTPase family. In terms of assembly, associates with the 50S ribosomal subunit.

GTPase that plays an essential role in the late steps of ribosome biogenesis. This is GTPase Der from Flavobacterium johnsoniae (strain ATCC 17061 / DSM 2064 / JCM 8514 / BCRC 14874 / CCUG 350202 / NBRC 14942 / NCIMB 11054 / UW101) (Cytophaga johnsonae).